The chain runs to 330 residues: Mitochondrial glycine transporter (330 aa).

Solcar repeat units follow at residues 11 to 94 (SSSY…LRQN), 122 to 206 (LSNL…LKKR), and 234 to 318 (TSAS…LIRR). 6 helical membrane passes run 17–42 (FTAGLGSGILSAVLLQPADLLKTRLQ), 69–95 (GTVPSALRTGFGSAIYFTSLNALRQNV), 128–153 (LTTGAVARAGAGFVLMPMTIIKVRYE), 181–204 (GFGATAIRDAPYAGLYVLFYEQLK), 238–264 (INFGSGVLAAGLATAITNPFDAIKTRI), and 293–311 (GLGLRMGRKAVSSALAWTI).

Belongs to the mitochondrial carrier (TC 2.A.29) family. SLC25A38 subfamily.

Its subcellular location is the mitochondrion inner membrane. It carries out the reaction glycine(in) = glycine(out). In terms of biological role, mitochondrial glycine transporter that imports glycine into the mitochondrial matrix. Plays an important role in providing glycine for the first enzymatic step in heme biosynthesis, the condensation of glycine with succinyl-CoA to produce 5-aminolevulinate (ALA) in the mitochondrial matrix. This Sclerotinia sclerotiorum (strain ATCC 18683 / 1980 / Ss-1) (White mold) protein is Mitochondrial glycine transporter.